Here is a 360-residue protein sequence, read N- to C-terminus: C-C chemokine receptor type 4 (360 aa).

Topologically, residues Met-1–Glu-39 are extracellular. Residues Leu-40–Tyr-67 form a helical membrane-spanning segment. Residues Lys-68 to Tyr-77 are Cytoplasmic-facing. A helical membrane pass occupies residues Leu-78 to Tyr-98. The Extracellular portion of the chain corresponds to Ala-99–Lys-111. A disulfide bridge connects residues Cys-110 and Cys-187. Residues Met-112–Ile-133 traverse the membrane as a helical segment. Residues Asp-134–Thr-150 are Cytoplasmic-facing. The chain crosses the membrane as a helical span at residues Leu-151–Phe-175. Residues Ser-176 to Ile-206 are Extracellular-facing. N-linked (GlcNAc...) asparagine glycosylation is found at Asn-183 and Asn-194. A helical transmembrane segment spans residues Asn-207–Ile-226. Over Arg-227–Lys-242 the chain is Cytoplasmic. The chain crosses the membrane as a helical span at residues Met-243–Leu-267. Over Val-268 to Tyr-284 the chain is Extracellular. A helical transmembrane segment spans residues Ala-285–Gly-308. Residues Glu-309 to Leu-360 are Cytoplasmic-facing.

Belongs to the G-protein coupled receptor 1 family. In terms of processing, in natural killer cells, CCL22 binding induces phosphorylation on yet undefined Ser/Thr residues, most probably by beta-adrenergic receptor kinases 1 and 2. As to expression, predominantly expressed in the thymus, in peripheral blood leukocytes, including T-cells, mostly CD4+ cells, and basophils, and in platelets; at lower levels, in the spleen and in monocytes. Detected also in macrophages, IL-2-activated natural killer cells and skin-homing memory T-cells, mostly the ones expressing the cutaneous lymphocyte antigen (CLA). Expressed in brain microvascular and coronary artery endothelial cells.

Its subcellular location is the cell membrane. High affinity receptor for the C-C type chemokines CCL17/TARC, CCL22/MDC and CKLF isoform 1/CKLF1. The activity of this receptor is mediated by G(i) proteins which activate a phosphatidylinositol-calcium second messenger system. Can function as a chemoattractant homing receptor on circulating memory lymphocytes and as a coreceptor for some primary HIV-2 isolates. In the CNS, could mediate hippocampal-neuron survival. This chain is C-C chemokine receptor type 4 (CCR4), found in Homo sapiens (Human).